We begin with the raw amino-acid sequence, 160 residues long: Outer membrane protein MT2024.1 (160 aa).

Positions 1–22 are cleaved as a signal peptide; it reads MSWSRVIAYGLLPGLALALTCG.

The protein resides in the cell outer membrane. The sequence is that of Outer membrane protein MT2024.1 from Mycobacterium tuberculosis (strain CDC 1551 / Oshkosh).